We begin with the raw amino-acid sequence, 447 residues long: Trigger factor (447 aa).

The 86-residue stretch at 164–249 folds into the PPIase FKBP-type domain; that stretch reads GNQVTFDFEG…VKLVEKSKLP (86 aa).

The protein belongs to the FKBP-type PPIase family. Tig subfamily.

The protein localises to the cytoplasm. It carries out the reaction [protein]-peptidylproline (omega=180) = [protein]-peptidylproline (omega=0). Its function is as follows. Involved in protein export. Acts as a chaperone by maintaining the newly synthesized protein in an open conformation. Functions as a peptidyl-prolyl cis-trans isomerase. This chain is Trigger factor, found in Psychrobacter cryohalolentis (strain ATCC BAA-1226 / DSM 17306 / VKM B-2378 / K5).